A 129-amino-acid polypeptide reads, in one-letter code: Dormancy-associated protein 2 (129 aa).

Residues 1–25 (MDSRKAMLILGLLAMVLLISSEVSA) form the signal peptide. The disordered stretch occupies residues 110–129 (GGYHGGGGHGGHGGASNNGN).

Belongs to the DRM1/ARP family. In terms of tissue distribution, expressed in axilary buds. Detected in growing stems, leaflets and floral organs, but not in roots.

The polypeptide is Dormancy-associated protein 2 (Pisum sativum (Garden pea)).